The following is a 280-amino-acid chain: MTILQAIVLAIVEGLTEFLPVSSTGHMIIAEGIMGVESTSFVRAFTVMIQFGAILSVLVLYRKRFFCFPVAPRALGQGKGKEFMSRFDLYWKLLIALVPAVILGFLFEDWVDRMLGSVWVVAVVLFLGGIFMLFVDKLFASSDRGEITYPKAFVIGLFQCLAIFLPGLSRSMATIVGGQQQKLSRKAAAEFSFFLAVPTMLGATLLKAYKLYKEGGIEIFREHMTVLLVGNIVAFIVALAAIKFFIGFLTRYGFKAFGYYRILVGGLLIVLMLSGVSLAV.

8 helical membrane passes run 1–21, 41–61, 87–107, 115–135, 147–167, 186–206, 226–246, and 260–280; these read MTIL…FLPV, FVRA…LVLY, FDLY…GFLF, LGSV…MLFV, ITYP…FLPG, KAAA…ATLL, VLLV…KFFI, and YRIL…SLAV.

The protein belongs to the UppP family.

The protein resides in the cell inner membrane. It catalyses the reaction di-trans,octa-cis-undecaprenyl diphosphate + H2O = di-trans,octa-cis-undecaprenyl phosphate + phosphate + H(+). Its function is as follows. Catalyzes the dephosphorylation of undecaprenyl diphosphate (UPP). Confers resistance to bacitracin. In Porphyromonas gingivalis (strain ATCC BAA-308 / W83), this protein is Undecaprenyl-diphosphatase.